We begin with the raw amino-acid sequence, 123 residues long: UPF0212 protein rrnAC0441 (123 aa).

This sequence belongs to the UPF0212 family.

This chain is UPF0212 protein rrnAC0441, found in Haloarcula marismortui (strain ATCC 43049 / DSM 3752 / JCM 8966 / VKM B-1809) (Halobacterium marismortui).